The following is a 191-amino-acid chain: Ribonuclease HII (191 aa).

An RNase H type-2 domain is found at 7-191; sequence ILMAGVDEVG…YSPVADLISK (185 aa). Residues Asp13, Glu14, and Asp103 each contribute to the a divalent metal cation site.

Belongs to the RNase HII family. Mn(2+) serves as cofactor. Mg(2+) is required as a cofactor.

The protein localises to the cytoplasm. It carries out the reaction Endonucleolytic cleavage to 5'-phosphomonoester.. Functionally, endonuclease that specifically degrades the RNA of RNA-DNA hybrids. In Legionella pneumophila subsp. pneumophila (strain Philadelphia 1 / ATCC 33152 / DSM 7513), this protein is Ribonuclease HII.